The sequence spans 642 residues: Threonine--tRNA ligase (642 aa).

A TGS domain is found at 1 to 61; it reads MPVITLPDGS…EHDAQIAIIT (61 aa). The tract at residues 243–534 is catalytic; that stretch reads DHRKIGKQLD…LTEEYAGFYP (292 aa). Positions 334, 385, and 511 each coordinate Zn(2+).

Belongs to the class-II aminoacyl-tRNA synthetase family. In terms of assembly, homodimer. The cofactor is Zn(2+).

It is found in the cytoplasm. It carries out the reaction tRNA(Thr) + L-threonine + ATP = L-threonyl-tRNA(Thr) + AMP + diphosphate + H(+). Its function is as follows. Catalyzes the attachment of threonine to tRNA(Thr) in a two-step reaction: L-threonine is first activated by ATP to form Thr-AMP and then transferred to the acceptor end of tRNA(Thr). Also edits incorrectly charged L-seryl-tRNA(Thr). This chain is Threonine--tRNA ligase, found in Sodalis glossinidius (strain morsitans).